Reading from the N-terminus, the 33-residue chain is Brevinin-2Rh (33 aa).

A disulfide bridge links C27 with C33.

Expressed by the skin glands.

It is found in the secreted. Antimicrobial peptide. The protein is Brevinin-2Rh of Pelophylax ridibundus (Marsh frog).